A 377-amino-acid chain; its full sequence is Spermidine/putrescine import ATP-binding protein PotA (377 aa).

The ABC transporter domain occupies 18–248 (IRLSGISKSF…PKNLFVARFI (231 aa)). 50-57 (GPSGCGKT) serves as a coordination point for ATP.

It belongs to the ABC transporter superfamily. Spermidine/putrescine importer (TC 3.A.1.11.1) family. As to quaternary structure, the complex is composed of two ATP-binding proteins (PotA), two transmembrane proteins (PotB and PotC) and a solute-binding protein (PotD).

The protein resides in the cell inner membrane. The catalysed reaction is ATP + H2O + polyamine-[polyamine-binding protein]Side 1 = ADP + phosphate + polyamineSide 2 + [polyamine-binding protein]Side 1.. Functionally, part of the ABC transporter complex PotABCD involved in spermidine/putrescine import. Responsible for energy coupling to the transport system. The protein is Spermidine/putrescine import ATP-binding protein PotA of Vibrio cholerae serotype O1 (strain ATCC 39315 / El Tor Inaba N16961).